A 419-amino-acid polypeptide reads, in one-letter code: UDP-N-acetylglucosamine 1-carboxyvinyltransferase (419 aa).

Residue 22–23 (KN) coordinates phosphoenolpyruvate. R92 is a binding site for UDP-N-acetyl-alpha-D-glucosamine. The Proton donor role is filled by C116. C116 carries the 2-(S-cysteinyl)pyruvic acid O-phosphothioketal modification. Residues D306 and I328 each contribute to the UDP-N-acetyl-alpha-D-glucosamine site.

The protein belongs to the EPSP synthase family. MurA subfamily.

The protein localises to the cytoplasm. It carries out the reaction phosphoenolpyruvate + UDP-N-acetyl-alpha-D-glucosamine = UDP-N-acetyl-3-O-(1-carboxyvinyl)-alpha-D-glucosamine + phosphate. It participates in cell wall biogenesis; peptidoglycan biosynthesis. In terms of biological role, cell wall formation. Adds enolpyruvyl to UDP-N-acetylglucosamine. The chain is UDP-N-acetylglucosamine 1-carboxyvinyltransferase from Psychromonas ingrahamii (strain DSM 17664 / CCUG 51855 / 37).